The chain runs to 68 residues: Serine palmitoyltransferase small subunit A (68 aa).

Over 1–9 the chain is Cytoplasmic; the sequence is MAFEDVWKK. A helical membrane pass occupies residues 10 to 26; the sequence is ISWLYYQYILVTALYML. Over 27-31 the chain is Lumenal; that stretch reads EPWER. A helical membrane pass occupies residues 32 to 54; that stretch reads AIFNSILISVAGMAVYTGYVFMP. Topologically, residues 55–68 are cytoplasmic; the sequence is QHIMAILQYFEMVQ.

The protein belongs to the SPTSS family. SPTSSA subfamily. In terms of assembly, component of the serine palmitoyltransferase (SPT) complex, which is composed of SPTLC1, SPTLC2 or SPTLC3 and SPTSSA or SPTSSB. The heterodimer consisting of SPTLC1 and SPTLC2/SPTLC3 forms the catalytic core of the enzyme, while SPTSSA or SPTSSB subunits determine substrate specificity. SPT also interacts with ORMDL proteins, especially ORMDL3, which negatively regulate SPT activity in the presence of ceramides.

The protein resides in the endoplasmic reticulum membrane. The protein operates within lipid metabolism; sphingolipid metabolism. Component of the serine palmitoyltransferase multisubunit enzyme (SPT) that catalyzes the initial and rate-limiting step in sphingolipid biosynthesis by condensing L-serine and activated acyl-CoA (most commonly palmitoyl-CoA) to form long-chain bases. The SPT complex is composed of SPTLC1, SPTLC2 or SPTLC3 and SPTSSA or SPTSSB. Within this complex, the heterodimer consisting of SPTLC1 and SPTLC2/SPTLC3 forms the catalytic core. Within the SPT complex, SPTSSA stimulates the catalytic activity and plays a role in substrate specificity, which depends upon the overall complex composition. The SPTLC1-SPTLC2-SPTSSA complex shows a strong preference for C16-CoA substrate, while the SPTLC1-SPTLC3-SPTSSA isozyme uses both C14-CoA and C16-CoA as substrates, with a slight preference for C14-CoA. Independently of its action as a SPT component, may be involved in MBOAT7 localization to mitochondria-associated membranes, a membrane bridge between the endoplasmic reticulum and mitochondria, may hence affect MBOAT7-catalyzed incorporation of arachidonic acid into phosphatidylinositol. This is Serine palmitoyltransferase small subunit A (sptssa) from Salmo salar (Atlantic salmon).